Reading from the N-terminus, the 856-residue chain is PR domain zinc finger protein 1 (856 aa).

Positions 115–233 (PRNLLFKYAA…ANQELLVWYC (119 aa)) constitute an SET domain. Disordered stretches follow at residues 357 to 399 (THSP…APGL) and 532 to 571 (GAAASMKDESSPPSGSPTAGTAATSEHVVQPKATSSVMAA). Low complexity-rich tracts occupy residues 373-393 (SSPEQSLKSSSPHSSPGNTVS) and 542-556 (SPPSGSPTAGTAATS). Residues 558-605 (HVVQPKATSSVMAAPSTDGAMNLIKNKRNMTGYKTLPYPLKKQNGKIK) form an interaction with PIAS1 region. 4 consecutive C2H2-type zinc fingers follow at residues 606–628 (YECNVCAKTFGQLSNLKVHLRVH), 634–656 (FKCQTCNKGFTQLAHLQKHYLVH), 662–684 (HECQVCHKRFSSTSNLKTHLRLH), and 690–712 (YQCKVCPAKFTQFVHLKLHKRLH). Lys-847 participates in a covalent cross-link: Glycyl lysine isopeptide (Lys-Gly) (interchain with G-Cter in SUMO1); alternate. Residue Lys-847 forms a Glycyl lysine isopeptide (Lys-Gly) (interchain with G-Cter in SUMO2); alternate linkage.

This sequence belongs to the class V-like SAM-binding methyltransferase superfamily. In terms of assembly, interacts with PRMT5. Interacts with FBXO10. Interacts with FBXO11. Interacts with multiple nuclear sumoylation E3 ligases, including CBX4, PIAS1, PIAS2, PIAS3, PIAS4, PML and RNF4, but not RANBP2. Interacts with LDB1, SMARCD3 and SMARCC1. Interacts with EEIG1; following TNFSF11/RANKL stimulation in bone marrow-derived macrophages, the interaction promotes the binding of PRDM1/BLIMP1 to the gene promoter of IRF8. Post-translationally, sumoylation at Lys-847 by PIAS1 increases transcriptional repressor activity, and is critical for plasma cell differentiation. Can be sumoylated with SUMO1 and SUMO2 by PML. Degradation of the wild-type protein mostly depends upon sumoylation, rather than ubiquitination. Desumoylated by SENP1 and SENP6. In terms of processing, ubiquitinated by SCF(FBXO11), leading to its degradation by the proteasome. Expressed in bone marrow macrophages (at protein level). Expressed in innate lymphocytes, including tissue-resident conventional natural killer (cNK) cells in liver. Expressed also weakly in tissue-resident natural killer (trNK) and natural killer T (NKT) cells in liver. In terms of tissue distribution, expressed in bone marrow, spleen and lymph node but not in brain, heart, kidney, liver, ovary or muscle. Weak expression detected in the lung. As to expression, expressed only in the yolk sac. Expressed in embryo, yolk sac, placenta, splenocytes, and activated T-cells.

It is found in the nucleus. It localises to the cytoplasm. Functionally, transcription factor that mediates a transcriptional program in various innate and adaptive immune tissue-resident lymphocyte T cell types such as tissue-resident memory T (Trm), natural killer (trNK) and natural killer T (NKT) cells and negatively regulates gene expression of proteins that promote the egress of tissue-resident T-cell populations from non-lymphoid organs. Plays a role in the development, retention and long-term establishment of adaptive and innate tissue-resident lymphocyte T cell types in non-lymphoid organs, such as the skin and gut, but also in other nonbarrier tissues like liver and kidney, and therefore may provide immediate immunological protection against reactivating infections or viral reinfection. Binds specifically to the PRDI element in the promoter of the beta-interferon gene. Drives the maturation of B-lymphocytes into Ig secreting cells. Associates with the transcriptional repressor ZNF683 to chromatin at gene promoter regions. Binds to the promoter and acts as a transcriptional repressor of IRF8, thereby promotes transcription of osteoclast differentiation factors such as NFATC1 and EEIG1. The protein is PR domain zinc finger protein 1 (Prdm1) of Mus musculus (Mouse).